The primary structure comprises 116 residues: Large ribosomal subunit protein uL22 (116 aa).

Belongs to the universal ribosomal protein uL22 family. In terms of assembly, part of the 50S ribosomal subunit.

In terms of biological role, this protein binds specifically to 23S rRNA; its binding is stimulated by other ribosomal proteins, e.g. L4, L17, and L20. It is important during the early stages of 50S assembly. It makes multiple contacts with different domains of the 23S rRNA in the assembled 50S subunit and ribosome. Its function is as follows. The globular domain of the protein is located near the polypeptide exit tunnel on the outside of the subunit, while an extended beta-hairpin is found that lines the wall of the exit tunnel in the center of the 70S ribosome. The polypeptide is Large ribosomal subunit protein uL22 (Sulfurihydrogenibium sp. (strain YO3AOP1)).